The primary structure comprises 1068 residues: MAELTNYKDAASNRHLRFKLQSLSRRLDELEEATKNLQRAEDELLDLQDKVIQAEGSDSSTLAEIEVLRQRVLKIEGKDEEIKRAEDLCHTMKEKLEEEENLTRELKSEIERLQKRMVDLEKLEEALSRSKNECSQLCLSLNEERNLTKKISSELEMLRVKVKELESSEDRLDKTEQSLVSELEKLKSLTLSFVNERKYLNEKEKENEKIIKELTQKLEQNKKMNRDHMRNASTFLERNDLRIEDGISSTLSSKESKRKGSLDYLKQVENETRDKSENEKNRNQEDNKVKDLNQEIEKLKTQIKHFESLEEELKKMRAKNNDLQDNYLTELNRNRSLASQLEEIKLQVRKQKELGNGDIEGEDAFLLGRGRHERTKLKGHGSEASVSKHTSRELSPQHKRERLRNREFALSNEHYSLSSKQASSPVFTNKRAAKASNMGMGTDSGTQETKRTEDRFAPGSSHSEGKRGREQPSVLSRYPPAAQEHTKVWKGAPKPGTESGLKGKVEKTTRTFSDSTHVSVPNDIVGKGDKTSDLSSEAHCGKRGQVPGHASQGTQAVESSCSKAIGALSSSQKASSEGLSKGKKTANGLAADANFSNSKAPILSKYPYSSRSQENILQGFSLPNKEGVDQPVAVVMEDSSQHEALRCRVIKSSGREKPDSDDDLDIESFVTAKLVNTTITPEPEPKPQPNSREKVKSRGGTRTALFENDKNAAIENDSVKPTRPSSNAIEFPDANCAGVKNQRPFSPREALRSRAIIKPVIIDKDVKKIMGGSGTEVVLEKQKSTSKSVTSKVTSSITIYPSDSSGPRAVPSEAPRERHTSTSNIQVGPPELTAISNHVSSPLELSIHKHDITLQLTEAERVGDGSPKNRAEMVVSRSSILIKPSESVEKNSHVPPAETIRWKSHSASSDSRHITVRNAWKSKRDLKCSEDPPTGIGRNMEATNAYTQRPCTDFLELEQPRSQPSEQGARRVGNSGDAPELSPRRTQSSLTASEVLTRRDRMGGAITAASCNHSSSMEEGEDSTFVTSRRIHNPLEHSELPGKQGLPEPEPVWTEERLHPAKPYAEED.

The residue at position 2 (alanine 2) is an N-acetylalanine. Residues alanine 11–leucine 354 are a coiled coil. Disordered stretches follow at residues leucine 251–leucine 292, threonine 375–arginine 402, and alanine 432–glutamate 558. A compositionally biased stretch (basic and acidic residues) spans lysine 254–leucine 292. A phosphoserine mark is found at serine 256, serine 261, serine 395, serine 513, serine 571, serine 575, serine 612, and serine 660. The span at arginine 510–serine 519 shows a compositional bias: polar residues. The tract at residues threonine 677–glycine 700 is disordered. Threonine 680 carries the post-translational modification Phosphothreonine. Residues serine 691 and serine 746 each carry the phosphoserine modification. A disordered region spans residues glutamine 782–proline 829. Low complexity predominate over residues threonine 785–serine 796. Residues alanine 834–proline 884 form a required for interaction with FLNA region. Serine 906 is modified (phosphoserine). The tract at residues arginine 924 to alanine 945 is disordered. Threonine 952 bears the Phosphothreonine mark. Disordered stretches follow at residues glutamine 959–valine 995 and asparagine 1033–aspartate 1068. The segment covering arginine 984 to glutamate 994 has biased composition (polar residues). Serine 988 is modified (phosphoserine).

Component of the CERF-1 ISWI chromatin remodeling complex (also called the CECR2-containing remodeling factor (CERF) complex) at least composed of CECR2 and SMARCA1. Component of the CERF-5 ISWI chromatin remodeling complex at least composed of CECR2 and SMARCA5/SNF2H. LUZP1 is detected as part of the CERF-1 and CERF-5 complexes in embryonic stem (ES) cells where it is involved in complex stabilization but is not detected in the complexes in the testis. Interacts (via C-terminus) with LIMA1/EPLIN; both proteins restrict ciliation and may work together to regulate this process. Interacts with myosin light chain MYL9; the interaction results in inhibition of phosphorylation of MYL9 by DAPK3. Interacts with DAPK3; the interaction is likely to occur throughout the cell cycle and reduces the LUZP1-mediated suppression of MYL9 phosphorylation. Interacts with the chromosomal passenger complex (CPC); CPC kinase activity is required for localization of LUZP1 to the centromere. Predominantly expressed in the brain (at protein level).

It is found in the cytoplasm. Its subcellular location is the cytoskeleton. It localises to the microtubule organizing center. The protein localises to the centrosome. The protein resides in the cilium basal body. It is found in the midbody. Its subcellular location is the chromosome. It localises to the centromere. The protein localises to the spindle. The protein resides in the stress fiber. It is found in the nucleus. Its subcellular location is the cell projection. It localises to the dendrite. The protein localises to the perikaryon. The protein resides in the cell junction. It is found in the tight junction. Its function is as follows. F-actin cross-linking protein. Stabilizes actin and acts as a negative regulator of primary cilium formation. Positively regulates the phosphorylation of both myosin II and protein phosphatase 1 regulatory subunit PPP1R12A/MYPT1 and promotes the assembly of myosin II stacks within actin stress fibers. Inhibits the phosphorylation of myosin light chain MYL9 by DAPK3 and suppresses the constriction velocity of the contractile ring during cytokinesis. Binds to microtubules and promotes epithelial cell apical constriction by up-regulating levels of diphosphorylated myosin light chain (MLC) through microtubule-dependent inhibition of MLC dephosphorylation by myosin phosphatase. Involved in regulation of cell migration, nuclear size and centriole number, probably through regulation of the actin cytoskeleton. Component of the CERF-1 and CERF-5 chromatin remodeling complexes in embryonic stem cells where it acts to stabilize the complexes. Plays a role in embryonic brain and cardiovascular development. This chain is Leucine zipper protein 1 (Luzp1), found in Mus musculus (Mouse).